Here is a 1339-residue protein sequence, read N- to C-terminus: Receptor tyrosine-protein kinase erbB-3 (1339 aa).

The first 19 residues, 1–19 (MRATGTLQVLCFLLSLARG), serve as a signal peptide directing secretion. Over 20–643 (SEMGNSQAVC…EVLMSKPHLV (624 aa)) the chain is Extracellular. Asn-126 carries N-linked (GlcNAc...) asparagine glycosylation. Disulfide bonds link Cys-186/Cys-194, Cys-190/Cys-202, Cys-210/Cys-218, Cys-214/Cys-226, Cys-227/Cys-235, Cys-231/Cys-243, Cys-246/Cys-255, Cys-259/Cys-286, Cys-290/Cys-301, Cys-305/Cys-320, and Cys-323/Cys-327. A glycan (N-linked (GlcNAc...) asparagine) is linked at Asn-250. Residues Asn-353, Asn-408, Asn-414, Asn-437, and Asn-469 are each glycosylated (N-linked (GlcNAc...) asparagine). 10 disulfide bridges follow: Cys-500–Cys-509, Cys-504–Cys-517, Cys-520–Cys-529, Cys-533–Cys-549, Cys-552–Cys-565, Cys-556–Cys-573, Cys-576–Cys-585, Cys-589–Cys-610, Cys-613–Cys-621, and Cys-617–Cys-629. Residue Asn-522 is glycosylated (N-linked (GlcNAc...) asparagine). N-linked (GlcNAc...) asparagine glycosylation occurs at Asn-566. N-linked (GlcNAc...) asparagine glycosylation is present at Asn-616. A helical membrane pass occupies residues 644 to 662 (IAVTVGLAVILMILGGSFL). At 663 to 1339 (YWRGRRIQNK…LFPKANAQRT (677 aa)) the chain is on the cytoplasmic side. A Phosphoserine modification is found at Ser-684. One can recognise a Protein kinase domain in the interval 707–964 (LRKLKVLGSG…TFKELANEFT (258 aa)). Residues 713–721 (LGSGVFGTV), Lys-740, 786–788 (QYL), and 832–837 (DLALRN) contribute to the ATP site. Asp-832 serves as the catalytic Proton acceptor. Ser-980 carries the phosphoserine modification. A compositionally biased stretch (low complexity) spans 1023 to 1036 (SLGSALSLPTGTLT). 2 disordered regions span residues 1023 to 1052 (SLGSALSLPTGTLTRPRGSQSLLSPSSGYM) and 1078 to 1215 (PISL…GSLE). Residues 1039 to 1052 (RGSQSLLSPSSGYM) show a composition bias toward polar residues. Residues 1172–1184 (GTLSSVGLSSVLG) show a composition bias toward low complexity. The span at 1185–1195 (TEEEDEDEEYE) shows a compositional bias: acidic residues.

It belongs to the protein kinase superfamily. Tyr protein kinase family. EGF receptor subfamily. As to quaternary structure, monomer and homodimer. Heterodimer with each of the other ERBB receptors (Potential). Interacts with CSPG5, PA2G4, GRB7, MYOC and MUC1. Found in a ternary complex with NRG1 and ITGAV:ITGB3 or ITGA6:ITGB4. Post-translationally, autophosphorylated. Ligand-binding increases phosphorylation on tyrosine residues and promotes its association with the p85 subunit of phosphatidylinositol 3-kinase.

The protein localises to the membrane. It catalyses the reaction L-tyrosyl-[protein] + ATP = O-phospho-L-tyrosyl-[protein] + ADP + H(+). Tyrosine-protein kinase that plays an essential role as cell surface receptor for neuregulins. Binds to neuregulin-1 (NRG1) and is activated by it; ligand-binding increases phosphorylation on tyrosine residues and promotes its association with the p85 subunit of phosphatidylinositol 3-kinase. May also be activated by CSPG5. Involved in the regulation of myeloid cell differentiation. This Rattus norvegicus (Rat) protein is Receptor tyrosine-protein kinase erbB-3 (Erbb3).